Here is a 464-residue protein sequence, read N- to C-terminus: tRNA modification GTPase MnmE (464 aa).

(6S)-5-formyl-5,6,7,8-tetrahydrofolate-binding residues include arginine 25, glutamate 87, and lysine 130. A TrmE-type G domain is found at 226-386 (GLSVVLAGQP…LREELLRIAG (161 aa)). Asparagine 236 contributes to the K(+) binding site. GTP-binding positions include 236–241 (NVGKSS), 255–261 (TPIAGTT), and 280–283 (DTAG). Serine 240 serves as a coordination point for Mg(2+). K(+)-binding residues include threonine 255, isoleucine 257, and threonine 260. Residue threonine 261 coordinates Mg(2+). (6S)-5-formyl-5,6,7,8-tetrahydrofolate is bound at residue lysine 464.

This sequence belongs to the TRAFAC class TrmE-Era-EngA-EngB-Septin-like GTPase superfamily. TrmE GTPase family. In terms of assembly, homodimer. Heterotetramer of two MnmE and two MnmG subunits. K(+) serves as cofactor.

It localises to the cytoplasm. In terms of biological role, exhibits a very high intrinsic GTPase hydrolysis rate. Involved in the addition of a carboxymethylaminomethyl (cmnm) group at the wobble position (U34) of certain tRNAs, forming tRNA-cmnm(5)s(2)U34. This chain is tRNA modification GTPase MnmE, found in Paraburkholderia xenovorans (strain LB400).